Consider the following 402-residue polypeptide: S-adenosylmethionine synthase (402 aa).

Position 137–142 (137–142 (GQGSAD)) interacts with ATP.

The protein belongs to the AdoMet synthase 2 family. The cofactor is Mg(2+).

It catalyses the reaction L-methionine + ATP + H2O = S-adenosyl-L-methionine + phosphate + diphosphate. Its pathway is amino-acid biosynthesis; S-adenosyl-L-methionine biosynthesis; S-adenosyl-L-methionine from L-methionine: step 1/1. Its function is as follows. Catalyzes the formation of S-adenosylmethionine from methionine and ATP. This chain is S-adenosylmethionine synthase, found in Pyrobaculum calidifontis (strain DSM 21063 / JCM 11548 / VA1).